The sequence spans 347 residues: GMP reductase (347 aa).

Position 108–131 (108–131) interacts with NADP(+); that stretch reads ADFEKTVQILALNPALNFVCIDVA. Residues G181 and G183 each contribute to the K(+) site. Catalysis depends on C186, which acts as the Thioimidate intermediate. Residue 216–239 coordinates NADP(+); that stretch reads IVSDGGCTMPGDVAKAFGGGADFV.

This sequence belongs to the IMPDH/GMPR family. GuaC type 1 subfamily. In terms of assembly, homotetramer.

The catalysed reaction is IMP + NH4(+) + NADP(+) = GMP + NADPH + 2 H(+). Its function is as follows. Catalyzes the irreversible NADPH-dependent deamination of GMP to IMP. It functions in the conversion of nucleobase, nucleoside and nucleotide derivatives of G to A nucleotides, and in maintaining the intracellular balance of A and G nucleotides. The sequence is that of GMP reductase from Salmonella typhi.